A 144-amino-acid polypeptide reads, in one-letter code: Maximins 11/H1 (144 aa).

The signal sequence occupies residues 1 to 18 (MNFKYIVAVSFLIASAYA). A propeptide spanning residues 19 to 43 (RSEENDEQSLSQRDVLEEESLREIR) is cleaved from the precursor. Asparagine 70 bears the Asparagine amide mark. Residues 74–123 (TAEDHEVMKRLEAVMRDLDSLDYPEEASERETRGFNQEEIANLFTKKEKR) constitute a propeptide that is removed on maturation. Residue leucine 143 is modified to Leucine amide.

This sequence belongs to the bombinin family. As to expression, expressed by the skin glands.

It localises to the secreted. Functionally, maximin-11 shows antimicrobial activity against bacteria and against the fungus C.albicans. It has little hemolytic activity. Maximin-H1 shows antibacterial activity against both Gram-positive and Gram-negative bacteria. It also shows antimicrobial activity against the fungus C.albicans. Shows strong hemolytic activity. This chain is Maximins 11/H1, found in Bombina maxima (Giant fire-bellied toad).